We begin with the raw amino-acid sequence, 272 residues long: Ras-related protein RSR1 (272 aa).

10–17 (GAGGVGKS) serves as a coordination point for GTP. The Effector region motif lies at 32-40 (YDPTIEDSY). GTP contacts are provided by residues 57–61 (DTAGI) and 116–119 (NKAD). The segment at 177–272 (DARNQSQQFS…KKNASTCTIL (96 aa)) is disordered. Polar residues-rich tracts occupy residues 180–232 (NQSQ…STPV) and 245–258 (SGSS…ATSQ). Cys269 carries the cysteine methyl ester modification. The S-geranylgeranyl cysteine moiety is linked to residue Cys269. Residues 270-272 (TIL) constitute a propeptide, removed in mature form.

This sequence belongs to the small GTPase superfamily. Ras family.

The protein resides in the cell membrane. It carries out the reaction GTP + H2O = GDP + phosphate + H(+). With respect to regulation, alternates between an inactive form bound to GDP and an active form bound to GTP. Activated by a guanine nucleotide-exchange factor (GEF) and inactivated by a GTPase-activating protein (GAP). Ras-related protein which binds GDP/GTP and possesses intrinsic GTPase activity. Involved in development of cell polarity during the cell division cycle, and essential for bud emergence. The protein is Ras-related protein RSR1 of Saccharomyces cerevisiae (strain ATCC 204508 / S288c) (Baker's yeast).